Reading from the N-terminus, the 803-residue chain is Translation initiation factor IF-2 (803 aa).

Disordered stretches follow at residues 95-125 (PVVEQKRETEPAPTQEVPLTSDTTNLNEKAE) and 138-178 (EVKE…EREE). The span at 111–121 (VPLTSDTTNLN) shows a compositional bias: polar residues. Residues 138–155 (EVKEEAKKTPSEKKETPK) are compositionally biased toward basic and acidic residues. A compositionally biased stretch (basic residues) spans 156–167 (KGPRKETRRSRK). Positions 168-178 (PDKEDKWEREE) are enriched in basic and acidic residues. The 170-residue stretch at 302-471 (PRAPVVTIMG…LLQAEVLELK (170 aa)) folds into the tr-type G domain. Residues 311 to 318 (GHVDHGKT) are G1. Residue 311–318 (GHVDHGKT) participates in GTP binding. Positions 336-340 (GITQH) are G2. Residues 357–360 (DTPG) form a G3 region. GTP contacts are provided by residues 357 to 361 (DTPGH) and 411 to 414 (NKID). The tract at residues 411–414 (NKID) is G4. The tract at residues 447 to 449 (SAK) is G5.

Belongs to the TRAFAC class translation factor GTPase superfamily. Classic translation factor GTPase family. IF-2 subfamily.

It localises to the cytoplasm. Functionally, one of the essential components for the initiation of protein synthesis. Protects formylmethionyl-tRNA from spontaneous hydrolysis and promotes its binding to the 30S ribosomal subunits. Also involved in the hydrolysis of GTP during the formation of the 70S ribosomal complex. The protein is Translation initiation factor IF-2 of Coxiella burnetii (strain CbuK_Q154) (Coxiella burnetii (strain Q154)).